Consider the following 387-residue polypeptide: tRNA pseudouridine synthase B (387 aa).

The active-site Nucleophile is D43.

It belongs to the pseudouridine synthase TruB family. Type 1 subfamily.

It catalyses the reaction uridine(55) in tRNA = pseudouridine(55) in tRNA. Responsible for synthesis of pseudouridine from uracil-55 in the psi GC loop of transfer RNAs. This chain is tRNA pseudouridine synthase B, found in Bifidobacterium longum (strain DJO10A).